The primary structure comprises 336 residues: Dihydroorotate dehydrogenase (quinone) (336 aa).

FMN contacts are provided by residues 62-66 (AGLDK) and T86. Position 66 (K66) interacts with substrate. 111–115 (NRMGF) is a binding site for substrate. The FMN site is built by N139 and N172. Residue N172 participates in substrate binding. S175 acts as the Nucleophile in catalysis. Residue N177 participates in substrate binding. FMN-binding residues include K217 and T245. Position 246 to 247 (246 to 247 (NT)) interacts with substrate. FMN contacts are provided by residues G268, G297, and 318 to 319 (YS).

It belongs to the dihydroorotate dehydrogenase family. Type 2 subfamily. As to quaternary structure, monomer. FMN serves as cofactor.

Its subcellular location is the cell membrane. The enzyme catalyses (S)-dihydroorotate + a quinone = orotate + a quinol. It participates in pyrimidine metabolism; UMP biosynthesis via de novo pathway; orotate from (S)-dihydroorotate (quinone route): step 1/1. Catalyzes the conversion of dihydroorotate to orotate with quinone as electron acceptor. The sequence is that of Dihydroorotate dehydrogenase (quinone) from Aliivibrio fischeri (strain ATCC 700601 / ES114) (Vibrio fischeri).